Here is a 206-residue protein sequence, read N- to C-terminus: Small ribosomal subunit protein uS5 (206 aa).

The segment covering 1–15 (MTDTPTKQETQSNKD) has biased composition (polar residues). The interval 1 to 50 (MTDTPTKQETQSNKDNVPGAIPVEQKKNNRNDRKRNRRGDSKNLERDSDW) is disordered. Over residues 38–50 (RGDSKNLERDSDW) the composition is skewed to basic and acidic residues. The S5 DRBM domain occupies 50-113 (WQERVVQIRR…SDGKKNLVRV (64 aa)).

This sequence belongs to the universal ribosomal protein uS5 family. As to quaternary structure, part of the 30S ribosomal subunit. Contacts proteins S4 and S8.

Its function is as follows. With S4 and S12 plays an important role in translational accuracy. Functionally, located at the back of the 30S subunit body where it stabilizes the conformation of the head with respect to the body. This is Small ribosomal subunit protein uS5 from Prochlorococcus marinus (strain MIT 9215).